We begin with the raw amino-acid sequence, 274 residues long: uncharacterized protein (274 aa).

Residues 1 to 30 (MTIDTPAREDQTLAATHRAMWALGDYALMA) form the signal peptide.

To M.tuberculosis Rv1403c.

This is an uncharacterized protein from Mycobacterium bovis (strain ATCC BAA-935 / AF2122/97).